The following is a 229-amino-acid chain: uncharacterized protein (229 aa).

This is an uncharacterized protein from Treponema pallidum (strain Nichols).